The following is a 338-amino-acid chain: Glycerol-3-phosphate dehydrogenase [NAD(P)+] (338 aa).

Residues S14, F15, R35, and K109 each contribute to the NADPH site. 2 residues coordinate sn-glycerol 3-phosphate: K109 and G137. NADPH is bound at residue A141. K192, D247, S257, R258, and N259 together coordinate sn-glycerol 3-phosphate. K192 functions as the Proton acceptor in the catalytic mechanism. R258 contacts NADPH. Residues L282 and E284 each coordinate NADPH.

It belongs to the NAD-dependent glycerol-3-phosphate dehydrogenase family.

It is found in the cytoplasm. It catalyses the reaction sn-glycerol 3-phosphate + NAD(+) = dihydroxyacetone phosphate + NADH + H(+). It carries out the reaction sn-glycerol 3-phosphate + NADP(+) = dihydroxyacetone phosphate + NADPH + H(+). It functions in the pathway membrane lipid metabolism; glycerophospholipid metabolism. Functionally, catalyzes the reduction of the glycolytic intermediate dihydroxyacetone phosphate (DHAP) to sn-glycerol 3-phosphate (G3P), the key precursor for phospholipid synthesis. This Rickettsia rickettsii (strain Iowa) protein is Glycerol-3-phosphate dehydrogenase [NAD(P)+].